Consider the following 456-residue polypeptide: Probable hexose phosphate transport protein (456 aa).

Helical transmembrane passes span 34–54 (IFYSMFFGYVFFYFTRKSFTF), 70–90 (LGIIGSTLYITYGISKFVSGV), 113–133 (IFFGLSSTVPLFVLFWGINGW), 161–181 (VWSTSHNIGGALIPVLTGIAI), 185–205 (GWRGAMFIPGIICIIMGFILI), 257–277 (YVLSNKWLWFLSFASFFIYVV), 302–322 (LCVSLFEIGGLFGMLLAGWLS), 331–351 (GPMNVVFSLGLLFSILGLWGT), 362–382 (AFLFIIGFFLFGPQMMIGLAA), 394–414 (ASGFTGWFAYFGAAFAGYPLG), and 421–441 (GWHGFFVALLACALIALLFFL).

This sequence belongs to the major facilitator superfamily. Organophosphate:Pi antiporter (OPA) (TC 2.A.1.4) family.

It is found in the cell membrane. Its function is as follows. Transport protein for sugar phosphate uptake. This chain is Probable hexose phosphate transport protein, found in Chlamydia muridarum (strain MoPn / Nigg).